Reading from the N-terminus, the 1337-residue chain is Receptor-type tyrosine-protein phosphatase eta (1337 aa).

A signal peptide spans 1-35 (MKPAAREARLPPRSPGLRWALPLLLLLLRLGQILC). The Extracellular portion of the chain corresponds to 36–975 (AGGTPSPIPD…LPQDPGVICG (940 aa)). Polar residues-rich tracts occupy residues 67 to 82 (SFHK…VETN) and 89 to 119 (SSGA…STGP). The segment at 67 to 124 (SFHKQNGTGTPQVETNTSEDGESSGANDSLRTPEQGSNGTDGASQKTPSSTGPSPVFD) is disordered. Residues Asn72, Asn82, Asn93, Asn104, Asn142, Asn172, Asn192, Asn231, Asn258, Asn278, Asn342, Asn351, Asn376, Asn391, Asn396, Asn413, Asn431, Asn501, Asn525, Asn536, Asn582, Asn603, Asn618, Asn628, Asn637, Asn666, Asn669, Asn761, Asn772, Asn784, Asn790, Asn824, Asn910, and Asn937 are each glycosylated (N-linked (GlcNAc...) asparagine). 9 consecutive Fibronectin type-III domains span residues 121–209 (PVFD…EPIP), 207–291 (PIPV…EGGL), 271–364 (NPYL…EFRT), 368–456 (QVFD…PPVP), 457–541 (VSDF…TVPS), 542–623 (AVFD…TAQY), 625–720 (RPSN…TDPA), 721–817 (SMAS…TDPP), and 816–902 (PPPP…SEVL). The interval 278–327 (NKTKGDPLGTEGGLDASNTERSRAGSPTAPVHDESLVGPVDPSSGQQSRD) is disordered. Residues 976-996 (AVFGCIFGALVIVTVGGFIFW) form a helical membrane-spanning segment. At 997–1337 (RKKRKDAKNN…TFGKTNGYIA (341 aa)) the chain is on the cytoplasmic side. At Ser1009 the chain carries Phosphoserine. The Tyrosine-protein phosphatase domain occupies 1041–1298 (FAEEYEDLKL…VFLNQCVLDI (258 aa)). Residues Asp1205, 1239–1245 (CSAGVGR), and Gln1283 each bind substrate. Residue Cys1239 is the Phosphocysteine intermediate of the active site.

It belongs to the protein-tyrosine phosphatase family. Receptor class 3 subfamily. In terms of assembly, monomer. Interacts with CTNNB1 (phosphorylated) and JUP (phosphorylated). Interacts with FLT3 (phosphorylated). Interacts with GAB1 and GRB2. N- and O-glycosylated. Post-translationally, N-glycosylated. In terms of tissue distribution, expressed in the promyelocytic cell line HL-60, the granulocyte-macrophage colony-stimulating factor-dependent leukemic cell line F-36P, and the IL3 and erythropoietin-dependent leukemic cell line F-36E. Expressed predominantly in epithelial cells and lymphocytes. Enhanced expression at high cell density. As to expression, expressed in the brain.

It localises to the cell membrane. Its subcellular location is the cell projection. The protein resides in the ruffle membrane. The protein localises to the cell junction. It is found in the secreted. It localises to the extracellular space. It carries out the reaction O-phospho-L-tyrosyl-[protein] + H2O = L-tyrosyl-[protein] + phosphate. Tyrosine phosphatase which dephosphorylates or contributes to the dephosphorylation of CTNND1, FLT3, PDGFRB, MET, KDR, LYN, SRC, MAPK1, MAPK3, EGFR, TJP1, OCLN, PIK3R1 and PIK3R2. Plays a role in cell adhesion, migration, proliferation and differentiation. Has a role in megakaryocytes and platelet formation. Involved in vascular development. Regulator of macrophage adhesion and spreading. Positively affects cell-matrix adhesion. Positive regulator of platelet activation and thrombosis. Negative regulator of cell proliferation. Negative regulator of PDGF-stimulated cell migration; through dephosphorylation of PDGFR. Positive regulator of endothelial cell survival, as well as of VEGF-induced SRC and AKT activation; through KDR dephosphorylation. Negative regulator of EGFR signaling pathway; through EGFR dephosphorylation. Enhances the barrier function of epithelial junctions during reassembly. Negatively regulates T-cell receptor (TCR) signaling. Upon T-cell TCR activation, it is up-regulated and excluded from the immunological synapses, while upon T-cell-antigen presenting cells (APC) disengagement, it is no longer excluded and can dephosphorylate PLCG1 and LAT to down-regulate prolongation of signaling. Functionally, activates angiogenesis and cell migration. Downregulates the expression of the endothelial adhesion molecules ICAM1 and VCAM1. In Homo sapiens (Human), this protein is Receptor-type tyrosine-protein phosphatase eta (PTPRJ).